Reading from the N-terminus, the 365-residue chain is tRNA 2-selenouridine synthase (365 aa).

Residues 16–138 (FLLKTPLIDL…LRRYLINVID (123 aa)) enclose the Rhodanese domain. C98 serves as the catalytic S-selanylcysteine intermediate.

This sequence belongs to the SelU family. Monomer.

It carries out the reaction 5-methylaminomethyl-2-thiouridine(34) in tRNA + selenophosphate + (2E)-geranyl diphosphate + H2O + H(+) = 5-methylaminomethyl-2-selenouridine(34) in tRNA + (2E)-thiogeraniol + phosphate + diphosphate. The catalysed reaction is 5-methylaminomethyl-2-thiouridine(34) in tRNA + (2E)-geranyl diphosphate = 5-methylaminomethyl-S-(2E)-geranyl-thiouridine(34) in tRNA + diphosphate. The enzyme catalyses 5-methylaminomethyl-S-(2E)-geranyl-thiouridine(34) in tRNA + selenophosphate + H(+) = 5-methylaminomethyl-2-(Se-phospho)selenouridine(34) in tRNA + (2E)-thiogeraniol. It catalyses the reaction 5-methylaminomethyl-2-(Se-phospho)selenouridine(34) in tRNA + H2O = 5-methylaminomethyl-2-selenouridine(34) in tRNA + phosphate. In terms of biological role, involved in the post-transcriptional modification of the uridine at the wobble position (U34) of tRNA(Lys), tRNA(Glu) and tRNA(Gln). Catalyzes the conversion of 2-thiouridine (S2U-RNA) to 2-selenouridine (Se2U-RNA). Acts in a two-step process involving geranylation of 2-thiouridine (S2U) to S-geranyl-2-thiouridine (geS2U) and subsequent selenation of the latter derivative to 2-selenouridine (Se2U) in the tRNA chain. This is tRNA 2-selenouridine synthase from Psychromonas ingrahamii (strain DSM 17664 / CCUG 51855 / 37).